A 524-amino-acid polypeptide reads, in one-letter code: GMP synthase [glutamine-hydrolyzing] (524 aa).

The 199-residue stretch at 9–207 (RILILDFSSQ…VIHICQCIPN (199 aa)) folds into the Glutamine amidotransferase type-1 domain. C86 (nucleophile) is an active-site residue. Active-site residues include H181 and E183. The GMPS ATP-PPase domain occupies 208–399 (WTTKHIIEDS…LGLPADLIYR (192 aa)). 235–241 (SGGVDSA) is an ATP binding site.

As to quaternary structure, homodimer.

It carries out the reaction XMP + L-glutamine + ATP + H2O = GMP + L-glutamate + AMP + diphosphate + 2 H(+). Its pathway is purine metabolism; GMP biosynthesis; GMP from XMP (L-Gln route): step 1/1. Its function is as follows. Catalyzes the synthesis of GMP from XMP. The chain is GMP synthase [glutamine-hydrolyzing] from Coxiella burnetii (strain Dugway 5J108-111).